An 85-amino-acid polypeptide reads, in one-letter code: Alpha-defensin 11 (85 aa).

Residues 1–11 (ALVLLAFQVQA) form the signal peptide. Residues 12-50 (DPIQNTDEETKTEEQPGEEDQAVSVSFGDPEGTSLQEES) constitute a propeptide that is removed on maturation. A disordered region spans residues 14–46 (IQNTDEETKTEEQPGEEDQAVSVSFGDPEGTSL). 3 cysteine pairs are disulfide-bonded: Cys-56/Cys-84, Cys-58/Cys-73, and Cys-63/Cys-83.

It belongs to the alpha-defensin family. In terms of tissue distribution, paneth cells of the small bowel.

The protein resides in the secreted. Functionally, probably contributes to the antimicrobial barrier function of the small bowel mucosa. The sequence is that of Alpha-defensin 11 (Defa11) from Mus musculus (Mouse).